The following is a 527-amino-acid chain: Benzoate--CoA ligase (527 aa).

This sequence belongs to the ATP-dependent AMP-binding enzyme family. Benzoate-CoA ligase subfamily. In terms of assembly, monomer.

It carries out the reaction benzoate + ATP + CoA = benzoyl-CoA + AMP + diphosphate. Functionally, catalyzes the ligation of benzoate and CoA to form benzoyl-CoA at the expense of ATP. The enzyme also ligates 2-aminobenzoate and CoA. The enzyme shows activity toward a number of benzoate derivatives. The protein is Benzoate--CoA ligase (bclA) of Thauera aromatica.